The following is a 232-amino-acid chain: Probable caffeoyl-CoA O-methyltransferase At4g26220 (232 aa).

Position 7 (Lys7) interacts with substrate. S-adenosyl-L-methionine-binding positions include Thr49, Glu71, 73–74, Ser79, Asp97, and Ala126; that span reads GV. Asp149 contacts substrate. A divalent metal cation is bound at residue Asp149. Asp151 contributes to the S-adenosyl-L-methionine binding site. The a divalent metal cation site is built by Asp175 and Asn176.

It belongs to the class I-like SAM-binding methyltransferase superfamily. Cation-dependent O-methyltransferase family. CCoAMT subfamily. It depends on a divalent metal cation as a cofactor.

The catalysed reaction is (E)-caffeoyl-CoA + S-adenosyl-L-methionine = (E)-feruloyl-CoA + S-adenosyl-L-homocysteine + H(+). It functions in the pathway aromatic compound metabolism; phenylpropanoid biosynthesis. Its function is as follows. Methylates caffeoyl-CoA to feruloyl-CoA and 5-hydroxyferuloyl-CoA to sinapoyl-CoA. Plays a role in the synthesis of feruloylated polysaccharides. Involved in the reinforcement of the plant cell wall. Also involved in the responding to wounding or pathogen challenge by the increased formation of cell wall-bound ferulic acid polymers. This chain is Probable caffeoyl-CoA O-methyltransferase At4g26220, found in Arabidopsis thaliana (Mouse-ear cress).